Reading from the N-terminus, the 402-residue chain is Prophage integrase IntZ (402 aa).

The region spanning 103 to 183 (AGFKKVAEDW…RIGEIFKFAV (81 aa)) is the Core-binding (CB) domain. A Tyr recombinase domain is found at 206 to 381 (GHNAWIPISE…AYLKQRRAMM (176 aa)). Active-site residues include arginine 244, lysine 271, histidine 332, arginine 335, and histidine 359. Tyrosine 368 functions as the O-(3'-phospho-DNA)-tyrosine intermediate in the catalytic mechanism.

Belongs to the 'phage' integrase family.

Integrase is necessary for integration of the phage into the host genome by site-specific recombination. In conjunction with excisionase, integrase is also necessary for excision of the prophage from the host genome. The polypeptide is Prophage integrase IntZ (intZ) (Escherichia coli (strain K12)).